Consider the following 371-residue polypeptide: Glyco-Gag protein (371 aa).

The Cytoplasmic segment spans residues 1-51 (MSGASSGTAIGAHLFGVSPEYRVLIGDEGAGPSKSLSEVSFSVWYRSRAAR). The chain crosses the membrane as a helical span at residues 52 to 72 (LVILCLVASFLVPCLTFLIAE). Topologically, residues 73–371 (AVMGQTVTTP…NVIDETFPLT (299 aa)) are extracellular. Residue asparagine 134 is glycosylated (N-linked (GlcNAc...) asparagine; by host). 2 disordered regions span residues 171–281 (VRPF…NNRP) and 350–371 (VPGEDGRPTQLPNVIDETFPLT). Over residues 174–193 (FLPPPKPPTPLPQPLSPQPS) the composition is skewed to pro residues. The span at 194–203 (APLTSSLYPV) shows a compositional bias: low complexity. Composition is skewed to pro residues over residues 204–220 (VPKPDPPKPPVLPPDPS) and 230–245 (EPPPYPGGHGPPPSGP).

Glycosylated by host. Post-translationally, cleaved by host near the middle of the molecule, releasing the c-terminal half containing capsid and nucleoprotein domains op GAG.

It localises to the host cell membrane. Functionally, plays a role in viral particle release. Presumably acts by facilitating the fission of the virion bud at the cell surface. In Feline sarcoma virus (strain Snyder-Theilen), this protein is Glyco-Gag protein.